The following is a 361-amino-acid chain: Probable dual-specificity RNA methyltransferase RlmN (361 aa).

Glutamate 91 (proton acceptor) is an active-site residue. The 239-residue stretch at glutamine 97–aspartate 335 folds into the Radical SAM core domain. A disulfide bridge links cysteine 104 with cysteine 340. Cysteine 111, cysteine 115, and cysteine 118 together coordinate [4Fe-4S] cluster. S-adenosyl-L-methionine-binding positions include glycine 163–glutamate 164, serine 195, serine 218–histidine 220, and asparagine 296. The S-methylcysteine intermediate role is filled by cysteine 340.

The protein belongs to the radical SAM superfamily. RlmN family. [4Fe-4S] cluster is required as a cofactor.

Its subcellular location is the cytoplasm. It catalyses the reaction adenosine(2503) in 23S rRNA + 2 reduced [2Fe-2S]-[ferredoxin] + 2 S-adenosyl-L-methionine = 2-methyladenosine(2503) in 23S rRNA + 5'-deoxyadenosine + L-methionine + 2 oxidized [2Fe-2S]-[ferredoxin] + S-adenosyl-L-homocysteine. The enzyme catalyses adenosine(37) in tRNA + 2 reduced [2Fe-2S]-[ferredoxin] + 2 S-adenosyl-L-methionine = 2-methyladenosine(37) in tRNA + 5'-deoxyadenosine + L-methionine + 2 oxidized [2Fe-2S]-[ferredoxin] + S-adenosyl-L-homocysteine. Functionally, specifically methylates position 2 of adenine 2503 in 23S rRNA and position 2 of adenine 37 in tRNAs. This chain is Probable dual-specificity RNA methyltransferase RlmN, found in Streptococcus mutans serotype c (strain ATCC 700610 / UA159).